Reading from the N-terminus, the 701-residue chain is Elongation factor G (701 aa).

Residues G8 to T291 form the tr-type G domain. Residues A17–T24, D89–H93, and N143–D146 contribute to the GTP site.

The protein belongs to the TRAFAC class translation factor GTPase superfamily. Classic translation factor GTPase family. EF-G/EF-2 subfamily.

It is found in the cytoplasm. Its function is as follows. Catalyzes the GTP-dependent ribosomal translocation step during translation elongation. During this step, the ribosome changes from the pre-translocational (PRE) to the post-translocational (POST) state as the newly formed A-site-bound peptidyl-tRNA and P-site-bound deacylated tRNA move to the P and E sites, respectively. Catalyzes the coordinated movement of the two tRNA molecules, the mRNA and conformational changes in the ribosome. The protein is Elongation factor G of Pseudomonas syringae pv. syringae (strain B728a).